Here is a 604-residue protein sequence, read N- to C-terminus: Protein CBFA2T2 (604 aa).

The interval 25-105 is disordered; that stretch reads KRVPAMPGSP…SSTSSALTNQ (81 aa). At S33 the chain carries Phosphoserine. K38 participates in a covalent cross-link: Glycyl lysine isopeptide (Lys-Gly) (interchain with G-Cter in SUMO2). Pro residues predominate over residues 46–59; that stretch reads PTMPPLPPINPGGP. Composition is skewed to polar residues over residues 64 to 79 and 88 to 105; these read FTPTALSNGINHSPPT and QRFSNGPASSTSSALTNQ. The tract at residues 107-215 is interaction with PRDM14; that stretch reads LPATCGARQL…QHEHLLLNTS (109 aa). In terms of domain architecture, TAFH spans 113–208; that stretch reads ARQLSKLKRF…TPSQYLAQHE (96 aa). Positions 229–265 are disordered; the sequence is VHGNGKRPSPERREENSFDRDTIAPEPPAKRVCTISP. The segment covering 236-251 has biased composition (basic and acidic residues); it reads PSPERREENSFDRDTI. Residue S264 is modified to Phosphoserine. The segment at 331-377 is nervy homology region 2 (NHR2); the sequence is QDELVDHRLTEREWADEWKHLDHALNCIMEMVEKTRRSMAVLRRCQE. Residues 397–427 are disordered; the sequence is RKTGTELVSRQHSPGSADSLSNDSQREFNSR. Residues 402–419 show a composition bias toward polar residues; it reads ELVSRQHSPGSADSLSND. S409 bears the Phosphoserine mark. The nervy homology region 3 (NHR3) stretch occupies residues 435–484; sequence VEFWKKTEEAVNKVKIQAMSEVQKAVAEAEQKAFEVIATERARMEQTIAD. K449 is covalently cross-linked (Glycyl lysine isopeptide (Lys-Gly) (interchain with G-Cter in SUMO2)). Residues 451 to 491 are a coiled coil; the sequence is QAMSEVQKAVAEAEQKAFEVIATERARMEQTIADVKRQAAE. Residues C507, C510, C518, C521, C527, C531, H539, and C543 each contribute to the Zn(2+) site. The segment at 507–543 adopts an MYND-type zinc-finger fold; it reads CWNCGRKASETCSGCNIARYCGSFCQHKDWERHHRLC. A disordered region spans residues 547 to 604; the sequence is LHGQSPHGQGRPLLPVGRGSSARSADCSVPSPALDKTSATTSRSSTPASVTAIDTNGL. Position 577 is a phosphoserine (S577). Residues 583 to 598 show a composition bias toward low complexity; it reads TSATTSRSSTPASVTA.

Belongs to the CBFA2T family. Homooligomer. Homotetramerization is mediated by nervy homology region 2. Can interact with RUNX1T1/CBFA2T1 and CBFA2T3/MTG16; heterotetramerization between members of the CBFA2T family is proposed. Forms a heterooligomer with the AML1-MTG8/ETO fusion protein. Interacts with PRDM14. Interacts with RBPJ, GFI1, TCF4. Interacts with TAL1 and CBFA2T3/MTG16; the heteromer with CBFA2T3/MTG16 may function in repression of TAL1. In terms of tissue distribution, ubiquitously expressed in fetal and adult tissues. Highly expressed in adult brain, heart, lung, kidney, lymph node, appendix, thymus, testis, uterus, small intestine, prostate and thymus.

The protein localises to the nucleus. Transcriptional corepressor which facilitates transcriptional repression via its association with DNA-binding transcription factors and recruitment of other corepressors and histone-modifying enzymes. Via association with PRDM14 is involved in regulation of embryonic stem cell (ESC) pluripotency. Involved in primordial germ cell (PCG) formation. Stabilizes PRDM14 and OCT4 on chromatin in a homooligomerization-dependent manner. Can repress the expression of MMP7 in a ZBTB33-dependent manner. May function as a complex with the chimeric protein RUNX1/AML1-CBFA2T1/MTG8 (AML1-MTG8/ETO fusion protein) which is produced in acute myeloid leukemia with the chromosomal translocation t(8;21). May thus be involved in the repression of AML1-dependent transcription and the induction of G-CSF/CSF3-dependent cell growth. May be a tumor suppressor gene candidate involved in myeloid tumors with the deletion of the 20q11 region. Through heteromerization with CBFA2T3/MTG16 may be involved in regulation of the proliferation and the differentiation of erythroid progenitors by repressing the expression of TAL1 target genes. Required for the maintenance of the secretory cell lineage in the small intestine. Can inhibit Notch signaling probably by association with RBPJ and may be involved in GFI1-mediated Paneth cell differentiation. This chain is Protein CBFA2T2 (CBFA2T2), found in Homo sapiens (Human).